We begin with the raw amino-acid sequence, 159 residues long: 2-C-methyl-D-erythritol 2,4-cyclodiphosphate synthase (159 aa).

A divalent metal cation is bound by residues Asp-10 and His-12. 4-CDP-2-C-methyl-D-erythritol 2-phosphate contacts are provided by residues 10–12 (DVH) and 36–37 (HS). His-44 is a binding site for a divalent metal cation. 4-CDP-2-C-methyl-D-erythritol 2-phosphate is bound by residues 58–60 (DIG), 134–137 (TTSE), Phe-141, and Arg-144.

The protein belongs to the IspF family. As to quaternary structure, homotrimer. A divalent metal cation serves as cofactor.

The enzyme catalyses 4-CDP-2-C-methyl-D-erythritol 2-phosphate = 2-C-methyl-D-erythritol 2,4-cyclic diphosphate + CMP. It functions in the pathway isoprenoid biosynthesis; isopentenyl diphosphate biosynthesis via DXP pathway; isopentenyl diphosphate from 1-deoxy-D-xylulose 5-phosphate: step 4/6. Its function is as follows. Involved in the biosynthesis of isopentenyl diphosphate (IPP) and dimethylallyl diphosphate (DMAPP), two major building blocks of isoprenoid compounds. Catalyzes the conversion of 4-diphosphocytidyl-2-C-methyl-D-erythritol 2-phosphate (CDP-ME2P) to 2-C-methyl-D-erythritol 2,4-cyclodiphosphate (ME-CPP) with a corresponding release of cytidine 5-monophosphate (CMP). This Roseobacter denitrificans (strain ATCC 33942 / OCh 114) (Erythrobacter sp. (strain OCh 114)) protein is 2-C-methyl-D-erythritol 2,4-cyclodiphosphate synthase.